A 525-amino-acid polypeptide reads, in one-letter code: DNA damage-binding protein CMR1 (525 aa).

Disordered regions lie at residues 38–86 (AGIF…AESE) and 212–233 (GILD…EYPD). Positions 53-62 (TKKKPAPKRV) are enriched in basic residues. WD repeat units follow at residues 183 to 224 (ITRE…DQNE), 241 to 281 (PHTN…ATEA), 288 to 328 (SDDE…KANP), 339 to 379 (LSEK…TKHP), 384 to 425 (EHES…KDWK), 448 to 491 (GKWV…LAQL), and 494 to 525 (DVIT…CLWM). The segment covering 223–232 (NESDEEDEYP) has biased composition (acidic residues).

The protein belongs to the WD repeat DDB2/WDR76 family.

DNA-binding protein that binds to both single- and double-stranded DNA. Binds preferentially to UV-damaged DNA. May be involved in DNA-metabolic processes. This is DNA damage-binding protein CMR1 from Coccidioides immitis (strain RS) (Valley fever fungus).